Here is a 362-residue protein sequence, read N- to C-terminus: Heat-inducible transcription repressor HrcA (362 aa).

It belongs to the HrcA family.

Its function is as follows. Negative regulator of class I heat shock genes (grpE-dnaK-dnaJ and groELS operons). Prevents heat-shock induction of these operons. This chain is Heat-inducible transcription repressor HrcA, found in Nitrobacter hamburgensis (strain DSM 10229 / NCIMB 13809 / X14).